The chain runs to 560 residues: uncharacterized protein (560 aa).

5 consecutive transmembrane segments (helical) span residues 9–29 (LVITILLIVLGANWLLSSFLL), 61–81 (ILVPTGFPLTTGLGLSLKYKI), 136–156 (IGIANSIATVEGFTLSLASMM), 305–325 (SLQIWGKLFAVLLHGGSASFI), and 442–462 (VVLELYCPYAIMGPVAHTNFY).

Its subcellular location is the membrane. This is an uncharacterized protein from Saccharomyces cerevisiae (strain ATCC 204508 / S288c) (Baker's yeast).